Consider the following 102-residue polypeptide: MEEALKENIMGALEQVVDPELGVDIVNLGLVYDVDMDEDGLTHITMTLTSMGCPLAPIIVDEVKKALADLPEVKDTEVHIVWNPPWTRDKMSRYAKIALGIQ.

Belongs to the MIP18 family.

In terms of biological role, involved in the maturation of iron-sulfur (Fe-S) proteins. May function as a Fe-S cluster carrier. The polypeptide is Fe-S protein maturation auxiliary factor YitW (yitW) (Bacillus subtilis (strain 168)).